The primary structure comprises 502 residues: RxLR effector protein BLN06 (502 aa).

Residues 1-20 (MTLLHCWLLLVGHLASTAYA) form the signal peptide. A glycan (N-linked (GlcNAc...) asparagine) is linked at Asn38. Positions 50 to 53 (LEER) match the dEER motif.

The protein belongs to the RxLR effector family.

It localises to the secreted. Its subcellular location is the host cell membrane. Functionally, secreted effector that triggers a robust hypersensitive response (HR) in Lactuca serriola LS102. The response to BLN06 was visible as chlorosis but not as strong necrosis. The chain is RxLR effector protein BLN06 from Bremia lactucae (Lettuce downy mildew).